We begin with the raw amino-acid sequence, 388 residues long: MNLHEYQAKQLFAEFGLPVPEGFACDTAQEAFEAAGRISTAKKVVKCQVHAGGRGKAGGVELHDTKEGVKEFAQKWLGKNLVTYQTDANGQPVTKILVEEASNIANELYLGAVVDRATRKIVFMASTEGGVDIEKIAEETPELIHQSAIDPLVGPQAYQGRELAFKLGLVGDQIKQFVKIFMGLGQMFSQYDLALLEINPLVITGEGNLLCLDGKINIDSNAMYRQPKLREMHDPSQEDEREAHAAQWELNYVALDGNVGCMVNGAGLAMGTMDIVNLHGGKPANFLDVGGGATKERVAEAFKIILSDDNVKAVLVNIFGGIVRCDMIAEGIIGAVKEVGVTVPVVVRLEGTNADLGREVLANSDVDIIAAVSLTDAAQKVVAAAEAK.

The ATP-grasp domain maps to 9 to 244 (KQLFAEFGLP…PSQEDEREAH (236 aa)). Residues Lys-46, 53–55 (GRG), Glu-99, Ser-102, and Glu-107 contribute to the ATP site. Mg(2+) is bound by residues Asn-199 and Asp-213. Substrate contacts are provided by residues Asn-264 and 321-323 (GIV).

The protein belongs to the succinate/malate CoA ligase beta subunit family. Heterotetramer of two alpha and two beta subunits. Mg(2+) is required as a cofactor.

It carries out the reaction succinate + ATP + CoA = succinyl-CoA + ADP + phosphate. The catalysed reaction is GTP + succinate + CoA = succinyl-CoA + GDP + phosphate. The protein operates within carbohydrate metabolism; tricarboxylic acid cycle; succinate from succinyl-CoA (ligase route): step 1/1. In terms of biological role, succinyl-CoA synthetase functions in the citric acid cycle (TCA), coupling the hydrolysis of succinyl-CoA to the synthesis of either ATP or GTP and thus represents the only step of substrate-level phosphorylation in the TCA. The beta subunit provides nucleotide specificity of the enzyme and binds the substrate succinate, while the binding sites for coenzyme A and phosphate are found in the alpha subunit. This is Succinate--CoA ligase [ADP-forming] subunit beta from Vibrio atlanticus (strain LGP32) (Vibrio splendidus (strain Mel32)).